The sequence spans 181 residues: Ribulose bisphosphate carboxylase small subunit 3B, chloroplastic (181 aa).

The N-terminal 54 residues, 1–54 (MASSMLSSAAVVTSPAQATMVAPFTGLKSSAAFPVTRKTNKDITSIASNGGRVS), are a transit peptide targeting the chloroplast.

It belongs to the RuBisCO small chain family. As to quaternary structure, heterohexadecamer of 8 large and 8 small subunits.

It localises to the plastid. The protein localises to the chloroplast. RuBisCO catalyzes two reactions: the carboxylation of D-ribulose 1,5-bisphosphate, the primary event in carbon dioxide fixation, as well as the oxidative fragmentation of the pentose substrate. Both reactions occur simultaneously and in competition at the same active site. Although the small subunit is not catalytic it is essential for maximal activity. The sequence is that of Ribulose bisphosphate carboxylase small subunit 3B, chloroplastic (RBCS-3B) from Arabidopsis thaliana (Mouse-ear cress).